Consider the following 502-residue polypeptide: Glycerol kinase (502 aa).

Thr-15 contributes to the ADP binding site. Thr-15, Thr-16, and Ser-17 together coordinate ATP. Thr-15 is a sn-glycerol 3-phosphate binding site. Arg-19 contributes to the ADP binding site. Arg-85, Glu-86, and Tyr-137 together coordinate sn-glycerol 3-phosphate. The glycerol site is built by Arg-85, Glu-86, and Tyr-137. His-233 bears the Phosphohistidine; by HPr mark. Position 247 (Asp-247) interacts with sn-glycerol 3-phosphate. Glycerol is bound by residues Asp-247 and Gln-248. ADP is bound by residues Thr-269 and Gly-312. Thr-269, Gly-312, Gln-316, and Gly-413 together coordinate ATP. ADP is bound by residues Gly-413 and Asn-417.

It belongs to the FGGY kinase family. In terms of assembly, homotetramer and homodimer (in equilibrium). The phosphoenolpyruvate-dependent sugar phosphotransferase system (PTS), including enzyme I, and histidine-containing protein (HPr) are required for the phosphorylation, which leads to the activation of the enzyme.

It carries out the reaction glycerol + ATP = sn-glycerol 3-phosphate + ADP + H(+). It participates in polyol metabolism; glycerol degradation via glycerol kinase pathway; sn-glycerol 3-phosphate from glycerol: step 1/1. Its activity is regulated as follows. Activated by phosphorylation and inhibited by fructose 1,6-bisphosphate (FBP). In terms of biological role, key enzyme in the regulation of glycerol uptake and metabolism. Catalyzes the phosphorylation of glycerol to yield sn-glycerol 3-phosphate. The protein is Glycerol kinase of Streptococcus agalactiae serotype Ia (strain ATCC 27591 / A909 / CDC SS700).